The following is an 894-amino-acid chain: Peroxisomal hydratase-dehydrogenase-epimerase (894 aa).

Short-chain dehydrogenase like regions lie at residues Arg-6–Asn-230 and Asp-311–Lys-523. NADP(+) contacts are provided by Val-14, Lys-53, Asn-99, Arg-132, Tyr-164, Lys-168, and Ala-197. Residue Tyr-164 is the Proton acceptor of the active site. Lys-168 functions as the Lowers pKa of active site Tyr in the catalytic mechanism. The active-site Proton acceptor is Tyr-458. Residues His-693, Gly-694, and Lys-723 each contribute to the (3R)-3-hydroxydecanoyl-CoA site. Residues Lys-763–Pro-782 form a disordered region. Positions Lys-776–Ser-887 constitute a MaoC-like domain. (3R)-3-hydroxydecanoyl-CoA contacts are provided by Asp-803, Asn-805, Gly-826, Phe-851, and Gly-853.

It belongs to the short-chain dehydrogenases/reductases (SDR) family. Monomer.

Its subcellular location is the peroxisome. It carries out the reaction a (3R)-3-hydroxyacyl-CoA = a (2E)-enoyl-CoA + H2O. The catalysed reaction is a (3R)-3-hydroxyacyl-CoA + NAD(+) = a 3-oxoacyl-CoA + NADH + H(+). The protein operates within lipid metabolism; fatty acid beta-oxidation. In terms of biological role, second trifunctional enzyme acting on the beta-oxidation pathway for fatty acids, possessing hydratase-dehydrogenase-epimerase activities. Converts trans-2-enoyl-CoA via D-3-hydroxyacyl-CoA to 3-ketoacyl-CoA. In Neurospora crassa (strain ATCC 24698 / 74-OR23-1A / CBS 708.71 / DSM 1257 / FGSC 987), this protein is Peroxisomal hydratase-dehydrogenase-epimerase (fox-2).